The primary structure comprises 149 residues: Oocyte-expressed protein homolog (149 aa).

Positions 1–22 (MVDDAGAAESQRGKQTPAHSLE) are disordered. Residues 49-110 (PLVFYLEAWL…RVQNRVKSML (62 aa)) form the KH; atypical domain.

It belongs to the KHDC1 family. Component of the subcortical maternal complex (SCMC), at least composed of NLRP5, KHDC3L, OOEP, and TLE6 isoform 1. Within the complex, interacts with NLRP5, KHDC3L and TLE6 isoform 1. As part of the SCMC interacts with the SCMC-associated protein NLRP4F. The SCMC may facilitate translocation of its components between the nuclear and cytoplasmic compartments. Forms a scaffold complex with KHDC3L/FILIA, and interacts with BLM and TRIM25 at DNA replication forks.

It localises to the cytoplasm. Its subcellular location is the nucleus. In terms of biological role, component of the subcortical maternal complex (SCMC), a multiprotein complex that plays a key role in early embryonic development. The SCMC complex is a structural constituent of cytoplasmic lattices, which consist in fibrous structures found in the cytoplasm of oocytes and preimplantation embryos. They are required to store maternal proteins critical for embryonic development, such as proteins that control epigenetic reprogramming of the preimplantation embryo, and prevent their degradation or activation. As part of the OOEP-KHDC3 scaffold, recruits BLM and TRIM25 to DNA replication forks, thereby promoting the ubiquitination of BLM by TRIM25, enhancing BLM retainment at replication forks and therefore promoting stalled replication fork restart. Positively regulates the homologous recombination-mediated DNA double-strand break (DSB) repair pathway by regulating ATM activation and RAD51 recruitment to DSBs in oocytes. Thereby contributes to oocyte survival and the resumption and completion of meiosis. This Homo sapiens (Human) protein is Oocyte-expressed protein homolog.